Reading from the N-terminus, the 80-residue chain is Exodeoxyribonuclease 7 small subunit (80 aa).

Belongs to the XseB family. As to quaternary structure, heterooligomer composed of large and small subunits.

It localises to the cytoplasm. It catalyses the reaction Exonucleolytic cleavage in either 5'- to 3'- or 3'- to 5'-direction to yield nucleoside 5'-phosphates.. Functionally, bidirectionally degrades single-stranded DNA into large acid-insoluble oligonucleotides, which are then degraded further into small acid-soluble oligonucleotides. This is Exodeoxyribonuclease 7 small subunit from Lactobacillus helveticus (strain DPC 4571).